We begin with the raw amino-acid sequence, 1690 residues long: DNA-directed RNA polymerase subunit beta' (1690 aa).

4 residues coordinate Zn(2+): C63, C65, C78, and C81. Positions 753, 755, and 757 each coordinate Mg(2+). C1107, C1295, C1302, and C1305 together coordinate Zn(2+).

The protein belongs to the RNA polymerase beta' chain family. In terms of assembly, the RNAP catalytic core consists of 2 alpha, 1 beta, 1 beta' and 1 omega subunit. When a sigma factor is associated with the core the holoenzyme is formed, which can initiate transcription. Mg(2+) serves as cofactor. The cofactor is Zn(2+).

The catalysed reaction is RNA(n) + a ribonucleoside 5'-triphosphate = RNA(n+1) + diphosphate. In terms of biological role, DNA-dependent RNA polymerase catalyzes the transcription of DNA into RNA using the four ribonucleoside triphosphates as substrates. This Thermotoga neapolitana (strain ATCC 49049 / DSM 4359 / NBRC 107923 / NS-E) protein is DNA-directed RNA polymerase subunit beta'.